A 282-amino-acid polypeptide reads, in one-letter code: 2-dehydro-3-deoxyphosphooctonate aldolase (282 aa).

The protein belongs to the KdsA family.

Its subcellular location is the cytoplasm. It carries out the reaction D-arabinose 5-phosphate + phosphoenolpyruvate + H2O = 3-deoxy-alpha-D-manno-2-octulosonate-8-phosphate + phosphate. It functions in the pathway carbohydrate biosynthesis; 3-deoxy-D-manno-octulosonate biosynthesis; 3-deoxy-D-manno-octulosonate from D-ribulose 5-phosphate: step 2/3. Its pathway is bacterial outer membrane biogenesis; lipopolysaccharide biosynthesis. The polypeptide is 2-dehydro-3-deoxyphosphooctonate aldolase (Bradyrhizobium diazoefficiens (strain JCM 10833 / BCRC 13528 / IAM 13628 / NBRC 14792 / USDA 110)).